A 61-amino-acid polypeptide reads, in one-letter code: Metallothionein-1C (61 aa).

Residues 1–29 are beta; it reads MDPNCSCSTGSSCSCAGSCTCKACRCPSC. A divalent metal cation contacts are provided by cysteine 5, cysteine 7, cysteine 13, cysteine 15, cysteine 19, cysteine 21, cysteine 24, cysteine 26, cysteine 29, cysteine 33, cysteine 34, cysteine 36, cysteine 37, cysteine 41, cysteine 44, cysteine 48, cysteine 50, cysteine 57, cysteine 59, and cysteine 60. The alpha stretch occupies residues 30-61; the sequence is KKSCCSCCPVGCAKCAQGCICKGASDKCSCCA.

This sequence belongs to the metallothionein superfamily. Type 1 family.

Functionally, metallothioneins have a high content of cysteine residues that bind various heavy metals; these proteins are transcriptionally regulated by both heavy metals and glucocorticoids. This chain is Metallothionein-1C (MT1C), found in Ovis aries (Sheep).